A 217-amino-acid chain; its full sequence is Thymidylate kinase (217 aa).

16-23 (GIDGAGKT) contributes to the ATP binding site.

Belongs to the thymidylate kinase family.

The catalysed reaction is dTMP + ATP = dTDP + ADP. Functionally, phosphorylation of dTMP to form dTDP in both de novo and salvage pathways of dTTP synthesis. In Xylella fastidiosa (strain M12), this protein is Thymidylate kinase.